We begin with the raw amino-acid sequence, 612 residues long: Peroxisomal carnitine O-octanoyltransferase (612 aa).

M1 carries the post-translational modification N-acetylmethionine. Residues K40 and K57 each carry the N6-succinyllysine modification. H327 acts as the Proton acceptor in catalysis. CoA-binding positions include K406 and 410–417; that span reads KEEALHPD. K406 carries the post-translational modification N6-acetyllysine; alternate. K406 carries the post-translational modification N6-succinyllysine; alternate. Residues Y439, T441, and T452 each contribute to the (R)-carnitine site. Positions 610-612 match the Microbody targeting signal motif; the sequence is AHL.

Belongs to the carnitine/choline acetyltransferase family.

The protein localises to the peroxisome. It carries out the reaction octanoyl-CoA + (R)-carnitine = O-octanoyl-(R)-carnitine + CoA. It catalyses the reaction 4,8-dimethylnonanoyl-CoA + (R)-carnitine = O-4,8-dimethylnonanoyl-(R)-carnitine + CoA. Its pathway is lipid metabolism; fatty acid beta-oxidation. Functionally, beta-oxidation of fatty acids. The highest activity concerns the C6 to C10 chain length substrate. The polypeptide is Peroxisomal carnitine O-octanoyltransferase (Crot) (Mus musculus (Mouse)).